We begin with the raw amino-acid sequence, 82 residues long: MVTIRLARGGAKKRPFYQVVVTDSRSPRDGRFIERVGFFNPIATGKAEALRLDLDRIEHWIGLGATVSDRVSTLIKDAKKVA.

Belongs to the bacterial ribosomal protein bS16 family.

The sequence is that of Small ribosomal subunit protein bS16 from Photorhabdus laumondii subsp. laumondii (strain DSM 15139 / CIP 105565 / TT01) (Photorhabdus luminescens subsp. laumondii).